Consider the following 660-residue polypeptide: Acetyl-coenzyme A synthetase (660 aa).

CoA is bound by residues Arg197 to Lys200 and Thr317. Residues Gly397 to Pro399, Asp421 to Thr426, Asp512, and Arg528 contribute to the ATP site. Residue Ser536 participates in CoA binding. An ATP-binding site is contributed by Arg539. Mg(2+)-binding residues include Val550 and Val555. An N6-acetyllysine modification is found at Lys625.

The protein belongs to the ATP-dependent AMP-binding enzyme family. The cofactor is Mg(2+). Acetylated. Deacetylation by the SIR2-homolog deacetylase activates the enzyme.

The catalysed reaction is acetate + ATP + CoA = acetyl-CoA + AMP + diphosphate. It participates in ketone degradation; acetoin degradation. In terms of biological role, catalyzes the conversion of acetate into acetyl-CoA (AcCoA), an essential intermediate at the junction of anabolic and catabolic pathways. AcsA undergoes a two-step reaction. In the first half reaction, AcsA combines acetate with ATP to form acetyl-adenylate (AcAMP) intermediate. In the second half reaction, it can then transfer the acetyl group from AcAMP to the sulfhydryl group of CoA, forming the product AcCoA. Although acetate is the preferred substrate of AcsA, propionate is also used, but at a diminished rate compared with that of acetate. Fatty acids with more than three carbon atoms are usually not accepted as substrates by AcsA. This Cupriavidus necator (strain ATCC 17699 / DSM 428 / KCTC 22496 / NCIMB 10442 / H16 / Stanier 337) (Ralstonia eutropha) protein is Acetyl-coenzyme A synthetase.